The primary structure comprises 280 residues: Nucleotide-binding protein Mfla_0145 (280 aa).

Residue 8–15 (GLSGSGKS) participates in ATP binding. Residue 57 to 60 (DTRS) coordinates GTP.

Belongs to the RapZ-like family.

Its function is as follows. Displays ATPase and GTPase activities. The chain is Nucleotide-binding protein Mfla_0145 from Methylobacillus flagellatus (strain ATCC 51484 / DSM 6875 / VKM B-1610 / KT).